The chain runs to 153 residues: Aspartate carbamoyltransferase regulatory chain (153 aa).

Residues Cys-109, Cys-114, Cys-138, and Cys-141 each contribute to the Zn(2+) site.

Belongs to the PyrI family. Contains catalytic and regulatory chains. Zn(2+) serves as cofactor.

Its function is as follows. Involved in allosteric regulation of aspartate carbamoyltransferase. This chain is Aspartate carbamoyltransferase regulatory chain, found in Cenarchaeum symbiosum (strain A).